The primary structure comprises 780 residues: Dynamin-related protein 3B (780 aa).

Position 2 is an N-acetylserine (serine 2). A Dynamin-type G domain is found at 40 to 315 (TIALPQVAVV…LVQHIKALLP (276 aa)). The G1 motif stretch occupies residues 50–57 (GSQSSGKS). 50–57 (GSQSSGKS) contributes to the GTP binding site. A G2 motif region spans residues 76 to 78 (CTR). Positions 157-160 (DLPG) are G3 motif. GTP-binding positions include 157 to 161 (DLPGI) and 226 to 229 (TKLD). The segment at 226 to 229 (TKLD) is G4 motif. Residues 256–259 (VNRS) are G5 motif. Disordered stretches follow at residues 536 to 558 (PVAR…QIKT) and 573 to 592 (QAVP…STSW). The segment covering 539–548 (RPRDTVEPER) has biased composition (basic and acidic residues). A compositionally biased stretch (polar residues) spans 549 to 558 (TASSGSQIKT). Residues 654-745 (IEITKLLLKS…TLDELPLEAE (92 aa)) enclose the GED domain. Basic and acidic residues predominate over residues 753 to 770 (IGSEAKHEELPGTRRSRT). Residues 753-780 (IGSEAKHEELPGTRRSRTETNGNGRLHM) are disordered. Residues 771 to 780 (ETNGNGRLHM) show a composition bias toward polar residues.

This sequence belongs to the TRAFAC class dynamin-like GTPase superfamily. Dynamin/Fzo/YdjA family. Interacts with ARC5 on peroxisomes and ELM1 on mitochondria.

It is found in the mitochondrion. Its subcellular location is the peroxisome. Its function is as follows. Involved in the control of mitochondrial and peroxisomal division and morphology. The protein is Dynamin-related protein 3B (DRP3B) of Arabidopsis thaliana (Mouse-ear cress).